Reading from the N-terminus, the 245-residue chain is Caffeoyl-CoA O-methyltransferase (245 aa).

Position 19 (Lys-19) interacts with substrate. S-adenosyl-L-methionine-binding positions include Thr-61, Glu-83, 85-86 (GV), Ser-91, Asp-109, and Ala-138. Asp-161 serves as a coordination point for substrate. Asp-161 provides a ligand contact to a divalent metal cation. Position 163 (Asp-163) interacts with S-adenosyl-L-methionine. Residues Asp-187 and Asn-188 each contribute to the a divalent metal cation site. Residue Asn-192 participates in substrate binding.

It belongs to the class I-like SAM-binding methyltransferase superfamily. Cation-dependent O-methyltransferase family. CCoAMT subfamily. It depends on a divalent metal cation as a cofactor.

The enzyme catalyses (E)-caffeoyl-CoA + S-adenosyl-L-methionine = (E)-feruloyl-CoA + S-adenosyl-L-homocysteine + H(+). It functions in the pathway aromatic compound metabolism; phenylpropanoid biosynthesis. Functionally, methylates caffeoyl-CoA to feruloyl-CoA and 5-hydroxyferuloyl-CoA to sinapoyl-CoA. Plays a role in the synthesis of feruloylated polysaccharides. Involved in the reinforcement of the plant cell wall. Also involved in the responding to wounding or pathogen challenge by the increased formation of cell wall-bound ferulic acid polymers. The sequence is that of Caffeoyl-CoA O-methyltransferase (CCOAOMT) from Zinnia elegans (Garden zinnia).